The following is a 199-amino-acid chain: Transgelin-3 (199 aa).

The Calponin-homology (CH) domain occupies 24 to 136; it reads ADLENKLVDW…RTLMALGSVA (113 aa). S163 carries the post-translational modification Phosphoserine. One copy of the Calponin-like repeat lies at 174–199; it reads IGLQMGSNKGASQAGMTGYGMPRQIM. A compositionally biased stretch (polar residues) spans 176 to 188; the sequence is LQMGSNKGASQAG. A disordered region spans residues 176-199; that stretch reads LQMGSNKGASQAGMTGYGMPRQIM.

Belongs to the calponin family. In terms of tissue distribution, widely expressed in the brain. Expression is increased in the superior frontal cortex of alcoholics, but not in the motor cortex or cerebellum.

This chain is Transgelin-3 (TAGLN3), found in Homo sapiens (Human).